We begin with the raw amino-acid sequence, 354 residues long: UPF0283 membrane protein Meso_1416 (354 aa).

Residues 1 to 28 (MSEPRRPAAFRIEPAPSPSPEATREDVR) form a disordered region. Helical transmembrane passes span 71–91 (LGAV…GLWA) and 105–125 (LGWL…AIVV).

Belongs to the UPF0283 family.

The protein localises to the cell inner membrane. This Chelativorans sp. (strain BNC1) protein is UPF0283 membrane protein Meso_1416.